The sequence spans 439 residues: 23S rRNA (uracil(1939)-C(5))-methyltransferase RlmD (439 aa).

The region spanning 10–68 is the TRAM domain; sequence KSTQPQRIEFTVDSLDHHCVGIGRHQGKAIFIEGALPGEQVKARILDDKKQYAHAALQQ. Residues cysteine 81, cysteine 87, cysteine 90, and cysteine 169 each contribute to the [4Fe-4S] cluster site. Residues glutamine 273, phenylalanine 302, asparagine 307, glutamate 323, aspartate 350, and aspartate 371 each contribute to the S-adenosyl-L-methionine site. Cysteine 397 functions as the Nucleophile in the catalytic mechanism.

The protein belongs to the class I-like SAM-binding methyltransferase superfamily. RNA M5U methyltransferase family. RlmD subfamily.

The catalysed reaction is uridine(1939) in 23S rRNA + S-adenosyl-L-methionine = 5-methyluridine(1939) in 23S rRNA + S-adenosyl-L-homocysteine + H(+). Functionally, catalyzes the formation of 5-methyl-uridine at position 1939 (m5U1939) in 23S rRNA. The sequence is that of 23S rRNA (uracil(1939)-C(5))-methyltransferase RlmD from Aeromonas salmonicida (strain A449).